Here is a 218-residue protein sequence, read N- to C-terminus: Guanylate kinase (218 aa).

The Guanylate kinase-like domain maps to 15 to 194; the sequence is GMMLVLSSPS…SIADVRAILR (180 aa). ATP is bound at residue 22–29; the sequence is SPSGAGKT.

It belongs to the guanylate kinase family.

The protein resides in the cytoplasm. The enzyme catalyses GMP + ATP = GDP + ADP. In terms of biological role, essential for recycling GMP and indirectly, cGMP. The polypeptide is Guanylate kinase (Rhodospirillum rubrum (strain ATCC 11170 / ATH 1.1.1 / DSM 467 / LMG 4362 / NCIMB 8255 / S1)).